A 371-amino-acid polypeptide reads, in one-letter code: NDMA-dependent alcohol dehydrogenase (371 aa).

Positions 40, 61, 91, 94, 97, 105, and 167 each coordinate Zn(2+).

It belongs to the zinc-containing alcohol dehydrogenase family. As to quaternary structure, homotrimer. It depends on NADH as a cofactor.

It catalyses the reaction N,N-dimethyl-4-nitrosoaniline + a primary alcohol = 4-(hydroxylamino)-N,N-dimethylaniline + an aldehyde. It carries out the reaction ethanol + A = acetaldehyde + AH2. With respect to regulation, inhibited by trans-4-(N,N-dimethylamino)-cinnamaldehyde through direct binding to the catalytic zinc ion in a substrate-like geometry. Isobutyramide acts as a competitive inhibitor with respect to the electron acceptor NDMA. Acetaldehyde, AMP, ADP, ATP, as well as CuSO(4), FeSO(4), HgCl(2), NiCl(2), ZnSO(4), KCN, and NaN(3) are additional inhibitors of the catalytic activity. Functionally, catalytically different from common alcohol dehydrogenases. Effective in oxidizing ethanol, other primary alcohols and benzylalcohol only in the presence of p-nitroso-N,N-dimethylaniline (NDMA) as an electron acceptor. NADH acts as a cofactor here instead as a coenzyme. The polypeptide is NDMA-dependent alcohol dehydrogenase (Amycolatopsis methanolica).